Consider the following 1098-residue polypeptide: Restriction of telomere capping protein 1 (1098 aa).

The disordered stretch occupies residues 26 to 57 (NSSTPQSHEISPSSSLGSSRSNKQTNQYSSQE). Low complexity predominate over residues 32 to 46 (SHEISPSSSLGSSRS). The segment covering 47–57 (NKQTNQYSSQE) has biased composition (polar residues). 6 WD repeats span residues 131 to 170 (ATNK…QSKV), 176 to 215 (DHSR…TKPV), 222 to 266 (LHSD…GGKV), 275 to 314 (LHTG…SRNT), 367 to 417 (DPTI…SFNS), and 432 to 473 (IEDL…TYED). A compositionally biased stretch (polar residues) spans 535 to 562 (QNEPVTPSSSSSIPNMHLSSSRPKLTRN). The interval 535-597 (QNEPVTPSSS…YSSPQYKRNQ (63 aa)) is disordered. The segment covering 563 to 593 (TSQTTQDSSSSQLSSVIPPPSSSQTYSSPQY) has biased composition (low complexity). One copy of the WD 7 repeat lies at 635-673 (PDGFTLVDVCLINASVAASVNNNRTSQVWKLLAVSIQEE). Residues 731–742 (KSTSTSGSQFGK) show a composition bias toward polar residues. The tract at residues 731–843 (KSTSTSGSQF…LKSSPPSVGV (113 aa)) is disordered. Positions 768-778 (SRNSSFSTTSF) are enriched in low complexity. Basic and acidic residues predominate over residues 779–804 (RLKEQERREHELRNTQNFRDENEKVS). The span at 806–816 (HSKSAPISISS) shows a compositional bias: polar residues. A WD 8 repeat occupies 891 to 934 (DVSNGVTMMGTSGLSLALKRNKTNEEGCEFVKVWKFKSLLRKSL). The RING-type; degenerate zinc finger occupies 1050 to 1093 (CVYCNEPCKGLAVTVGLKCGHQGHFGCLKEWFIEDQNTECPGGC).

This sequence belongs to the WD repeat RTC1 family.

It is found in the vacuole. In terms of biological role, may be involved in a process influencing telomere capping. The sequence is that of Restriction of telomere capping protein 1 (RTC1) from Candida dubliniensis (strain CD36 / ATCC MYA-646 / CBS 7987 / NCPF 3949 / NRRL Y-17841) (Yeast).